Reading from the N-terminus, the 490-residue chain is Acetyl-coenzyme A carboxylase carboxyl transferase subunit beta, chloroplastic (490 aa).

Residues 221 to 490 (LWVQCENCYG…PLNQKSSKIK (270 aa)) form the CoA carboxyltransferase N-terminal domain. Zn(2+) contacts are provided by cysteine 225, cysteine 228, cysteine 244, and cysteine 247. The C4-type zinc-finger motif lies at 225 to 247 (CENCYGLNYKKFLKSKMNICEQC).

It belongs to the AccD/PCCB family. Acetyl-CoA carboxylase is a heterohexamer composed of biotin carboxyl carrier protein, biotin carboxylase and 2 subunits each of ACCase subunit alpha and ACCase plastid-coded subunit beta (accD). It depends on Zn(2+) as a cofactor. Expressed in leaves, ripening and mature fruit.

It is found in the plastid. Its subcellular location is the chloroplast stroma. The protein localises to the chromoplast stroma. The enzyme catalyses N(6)-carboxybiotinyl-L-lysyl-[protein] + acetyl-CoA = N(6)-biotinyl-L-lysyl-[protein] + malonyl-CoA. Its pathway is lipid metabolism; malonyl-CoA biosynthesis; malonyl-CoA from acetyl-CoA: step 1/1. Component of the acetyl coenzyme A carboxylase (ACC) complex. Biotin carboxylase (BC) catalyzes the carboxylation of biotin on its carrier protein (BCCP) and then the CO(2) group is transferred by the transcarboxylase to acetyl-CoA to form malonyl-CoA. Is up-regulated upon chromoplast differentiation, presumably for fatty acid biosynthesis. The polypeptide is Acetyl-coenzyme A carboxylase carboxyl transferase subunit beta, chloroplastic (Solanum lycopersicum (Tomato)).